A 179-amino-acid chain; its full sequence is Large ribosomal subunit protein uL5 (179 aa).

It belongs to the universal ribosomal protein uL5 family. Part of the 50S ribosomal subunit; part of the 5S rRNA/L5/L18/L25 subcomplex. Contacts the 5S rRNA and the P site tRNA. Forms a bridge to the 30S subunit in the 70S ribosome.

Functionally, this is one of the proteins that bind and probably mediate the attachment of the 5S RNA into the large ribosomal subunit, where it forms part of the central protuberance. In the 70S ribosome it contacts protein S13 of the 30S subunit (bridge B1b), connecting the 2 subunits; this bridge is implicated in subunit movement. Contacts the P site tRNA; the 5S rRNA and some of its associated proteins might help stabilize positioning of ribosome-bound tRNAs. This is Large ribosomal subunit protein uL5 from Bacillus mycoides (strain KBAB4) (Bacillus weihenstephanensis).